The chain runs to 512 residues: Glutamyl-tRNA(Gln) amidotransferase subunit A (512 aa).

Active-site charge relay system residues include Lys-82 and Ser-157. Ser-181 (acyl-ester intermediate) is an active-site residue.

It belongs to the amidase family. GatA subfamily. In terms of assembly, heterotrimer of A, B and C subunits.

The catalysed reaction is L-glutamyl-tRNA(Gln) + L-glutamine + ATP + H2O = L-glutaminyl-tRNA(Gln) + L-glutamate + ADP + phosphate + H(+). Its function is as follows. Allows the formation of correctly charged Gln-tRNA(Gln) through the transamidation of misacylated Glu-tRNA(Gln) in organisms which lack glutaminyl-tRNA synthetase. The reaction takes place in the presence of glutamine and ATP through an activated gamma-phospho-Glu-tRNA(Gln). This chain is Glutamyl-tRNA(Gln) amidotransferase subunit A, found in Bordetella bronchiseptica (strain ATCC BAA-588 / NCTC 13252 / RB50) (Alcaligenes bronchisepticus).